A 238-amino-acid chain; its full sequence is LTAKLGYPITDDLDIYTRLGGMVWRADAKNNEGFKDHDTGVSPVFAGGVEYAITPEIATRLEYQWTNNIGDANTVGGRPDNGLLSVGVSYRFGQQEEAAPVVVAPAPAPEVQTKHFTLKSDVLFNFNKATLKPEGQQALDQMYSQLSNLDPKDGSVVVLGFTDRIGSDAYNQGLSEKRAQSVVDYLISKGIPSDKISARGMGESNPVTGNTCDNVKARAALIDCLAPDRRVEIEVKGI.

5 consecutive transmembrane segments (beta stranded) span residues 1–8, 13–21, 43–52, 57–64, and 83–91; these read LTAKLGYP, LDIYTRLGG, PVFAGGVEYA, IATRLEYQ, and LLSVGVSYR. 3 consecutive repeat copies span residues 104-105, 106-107, and 108-109. A 3 X 2 AA tandem repeats of A-P region spans residues 104–109; the sequence is APAPAP. One can recognise an OmpA-like domain in the interval 111–238; that stretch reads VQTKHFTLKS…RRVEIEVKGI (128 aa). C212 and C224 form a disulfide bridge.

This sequence belongs to the outer membrane OOP (TC 1.B.6) superfamily. OmpA family. As to quaternary structure, monomer and homodimer.

The protein localises to the cell outer membrane. With TolR probably plays a role in maintaining the position of the peptidoglycan cell wall in the periplasm. Acts as a porin with low permeability that allows slow penetration of small solutes; an internal gate slows down solute passage. The polypeptide is Outer membrane protein A (Citrobacter freundii).